A 297-amino-acid chain; its full sequence is Large ribosomal subunit protein uL18 (297 aa).

It belongs to the universal ribosomal protein uL18 family. In terms of assembly, component of the large ribosomal subunit (LSU).

It localises to the cytoplasm. The protein localises to the nucleus. Component of the ribosome, a large ribonucleoprotein complex responsible for the synthesis of proteins in the cell. The small ribosomal subunit (SSU) binds messenger RNAs (mRNAs) and translates the encoded message by selecting cognate aminoacyl-transfer RNA (tRNA) molecules. The large subunit (LSU) contains the ribosomal catalytic site termed the peptidyl transferase center (PTC), which catalyzes the formation of peptide bonds, thereby polymerizing the amino acids delivered by tRNAs into a polypeptide chain. The nascent polypeptides leave the ribosome through a tunnel in the LSU and interact with protein factors that function in enzymatic processing, targeting, and the membrane insertion of nascent chains at the exit of the ribosomal tunnel. This is Large ribosomal subunit protein uL18 (RpL5) from Aedes aegypti (Yellowfever mosquito).